The chain runs to 646 residues: Long-chain fatty acid transport protein 1 (646 aa).

Residues 1–13 (MRAPGAGSASVAS) are Extracellular-facing. The helical transmembrane segment at 14–34 (LVLLWLLGLPWTWSTAAALGV) threads the bilayer. The Cytoplasmic segment spans residues 35–646 (YVGGGGWRFL…TRICSGAFAL (612 aa)). The tract at residues 191–475 (EMSGELGKSL…YISESATSKK (285 aa)) is sufficient for oligomerization. 246 to 257 (YIYTSGTTGLPK) contacts AMP.

This sequence belongs to the ATP-dependent AMP-binding enzyme family. As to quaternary structure, self-associates. May function as a homodimer. Interacts with EPRS1; mediates the translocation of SLC27A1 from the cytoplasm to the plasma membrane thereby increasing the uptake of long-chain fatty acids. Interacts with DGAT2 and this interaction is enhanced in the presence of ZFYVE1.

Its subcellular location is the cell membrane. It localises to the endomembrane system. It is found in the cytoplasm. The enzyme catalyses a fatty acid(in) = a fatty acid(out). The catalysed reaction is (9Z)-octadecenoate(out) = (9Z)-octadecenoate(in). It catalyses the reaction hexadecanoate(out) = hexadecanoate(in). It carries out the reaction (5Z,8Z,11Z,14Z)-eicosatetraenoate(out) = (5Z,8Z,11Z,14Z)-eicosatetraenoate(in). The enzyme catalyses (9Z,12Z)-octadecadienoate(out) = (9Z,12Z)-octadecadienoate(in). The catalysed reaction is a long-chain fatty acid + ATP + CoA = a long-chain fatty acyl-CoA + AMP + diphosphate. It catalyses the reaction (5Z,8Z,11Z,14Z)-eicosatetraenoate + ATP + CoA = (5Z,8Z,11Z,14Z)-eicosatetraenoyl-CoA + AMP + diphosphate. It carries out the reaction a very long-chain fatty acid + ATP + CoA = a very long-chain fatty acyl-CoA + AMP + diphosphate. The enzyme catalyses tetracosanoate + ATP + CoA = tetracosanoyl-CoA + AMP + diphosphate. Its activity is regulated as follows. Inhibited by Triacsin C. In terms of biological role, mediates the import of long-chain fatty acids (LCFA) into the cell by facilitating their transport at the plasma membrane. Also functions as an acyl-CoA ligase catalyzing the ATP-dependent formation of fatty acyl-CoA using LCFA and very-long-chain fatty acids (VLCFA) as substrates, which prevents fatty acid efflux from cells and might drive more fatty acid uptake. May act directly as a bona fide transporter, or alternatively, in a cytoplasmic or membrane-associated multimeric protein complex to trap and draw fatty acids towards accumulation. Plays a pivotal role in regulating available LCFA substrates from exogenous sources in tissues undergoing high levels of beta-oxidation or triglyceride synthesis. May be involved in regulation of cholesterol metabolism. Probably involved in fatty acid transport across the blood barrier. The chain is Long-chain fatty acid transport protein 1 from Bos taurus (Bovine).